The sequence spans 307 residues: GTPase Era (307 aa).

The Era-type G domain maps to 17 to 186 (RCGFVAIVGR…LELLKPYLPE (170 aa)). The interval 25–32 (GRPNVGKS) is G1. GTP is bound at residue 25 to 32 (GRPNVGKS). The segment at 51 to 55 (QTTRN) is G2. The tract at residues 72–75 (DTPG) is G3. GTP contacts are provided by residues 72–76 (DTPGF) and 133–136 (NKID). The interval 133–136 (NKID) is G4. Residues 165–167 (VSA) are G5. The region spanning 217–293 (LGEELPYAMN…FLKVWVKVKS (77 aa)) is the KH type-2 domain.

This sequence belongs to the TRAFAC class TrmE-Era-EngA-EngB-Septin-like GTPase superfamily. Era GTPase family. As to quaternary structure, monomer.

It is found in the cytoplasm. The protein localises to the cell inner membrane. In terms of biological role, an essential GTPase that binds both GDP and GTP, with rapid nucleotide exchange. Plays a role in 16S rRNA processing and 30S ribosomal subunit biogenesis and possibly also in cell cycle regulation and energy metabolism. In Neisseria meningitidis serogroup C / serotype 2a (strain ATCC 700532 / DSM 15464 / FAM18), this protein is GTPase Era.